Consider the following 290-residue polypeptide: Enoyl-CoA hydratase, mitochondrial (290 aa).

The N-terminal 27 residues, 1–27 (MAALRVLLSCVRGPLRPPVRCPAWRPF), are a transit peptide targeting the mitochondrion. Thr-46 is modified (phosphothreonine). Position 98–101 (98–101 (ADIK)) interacts with substrate. Position 101 is an N6-acetyllysine; alternate (Lys-101). Lys-101 is subject to N6-succinyllysine; alternate. Ser-114 is modified (phosphoserine). Lys-115 is modified (N6-acetyllysine; alternate). Lys-115 is subject to N6-succinyllysine; alternate. Lys-118 is subject to N6-acetyllysine. Gly-141 is a binding site for substrate. Lys-204 is modified (N6-succinyllysine). Lys-211 is modified (N6-acetyllysine).

Belongs to the enoyl-CoA hydratase/isomerase family. In terms of assembly, homohexamer; dimer of trimers. As to expression, liver, fibroblast, muscle. Barely detectable in spleen and kidney.

The protein resides in the mitochondrion matrix. It carries out the reaction a (3S)-3-hydroxyacyl-CoA = a (2E)-enoyl-CoA + H2O. The catalysed reaction is a (3E)-enoyl-CoA = a 4-saturated (2E)-enoyl-CoA. It catalyses the reaction (3E)-hexenoyl-CoA = (2E)-hexenoyl-CoA. The enzyme catalyses (3S)-3-hydroxybutanoyl-CoA = (2E)-butenoyl-CoA + H2O. It carries out the reaction 3-hydroxyisovaleryl-CoA = 3-methylbut-2-enoyl-CoA + H2O. The catalysed reaction is 3-hydroxypropanoyl-CoA = acryloyl-CoA + H2O. It catalyses the reaction 3-hydroxybutanoyl-CoA = (2E)-butenoyl-CoA + H2O. The enzyme catalyses 2-methylpropenoyl-CoA + H2O = (S)-3-hydroxyisobutanoyl-CoA. It carries out the reaction (3S)-hydroxyhexanoyl-CoA = (2E)-hexenoyl-CoA + H2O. The catalysed reaction is (3S)-hydroxydecanoyl-CoA = (2E)-decenoyl-CoA + H2O. Its pathway is lipid metabolism; fatty acid beta-oxidation. Converts unsaturated trans-2-enoyl-CoA species ((2E)-enoyl-CoA) to the corresponding (3S)-3hydroxyacyl-CoA species through addition of a water molecule to the double bond. Catalyzes the hydration of medium- and short-chained fatty enoyl-CoA thioesters from 4 carbons long (C4) up to C16. Has high substrate specificity for crotonyl-CoA ((2E)-butenoyl-CoA) and moderate specificity for acryloyl-CoA, 3-methylcrotonyl-CoA (3-methyl-(2E)-butenoyl-CoA) and methacrylyl-CoA ((2E)-2-methylpropenoyl-CoA). Can bind tiglyl-CoA (2-methylcrotonoyl-CoA), but hydrates only a small amount of this substrate. Plays a key role in the beta-oxidation spiral of short- and medium-chain fatty acid oxidation. At a lower rate than the hydratase reaction, catalyzes the isomerase reaction of trans-3-enoyl-CoA species (such as (3E)-hexenoyl-CoA) to trans-2-enoyl-CoA species (such as (2E)-hexenoyl-CoA), which are subsequently hydrated to 3(S)-3-hydroxyacyl-CoA species (such as (3S)-hydroxyhexanoyl-CoA). The protein is Enoyl-CoA hydratase, mitochondrial of Homo sapiens (Human).